Reading from the N-terminus, the 247-residue chain is Orotidine 5'-phosphate decarboxylase (247 aa).

Residues D22, K44, 71 to 80 (DLKFHDIPNT), T131, R192, Q201, G221, and R222 each bind substrate. K73 functions as the Proton donor in the catalytic mechanism.

The protein belongs to the OMP decarboxylase family. Type 1 subfamily. As to quaternary structure, homodimer.

The catalysed reaction is orotidine 5'-phosphate + H(+) = UMP + CO2. The protein operates within pyrimidine metabolism; UMP biosynthesis via de novo pathway; UMP from orotate: step 2/2. Catalyzes the decarboxylation of orotidine 5'-monophosphate (OMP) to uridine 5'-monophosphate (UMP). The protein is Orotidine 5'-phosphate decarboxylase of Pectobacterium atrosepticum (strain SCRI 1043 / ATCC BAA-672) (Erwinia carotovora subsp. atroseptica).